The following is a 370-amino-acid chain: MGLWALLPGWVSATLLLALAALPAALAANSSGRWWGIVNVASSTNLLTDSKSLQLVLEPSLQLLSRKQRRLIRQNPGILHSVSGGLQSAVRECKWQFRNRRWNCPTAPGPHLFGKIVNRGCRETAFIFAITSAGVTHSVARSCSEGSIESCTCDYRRRGPGGPDWHWGGCSDNIDFGRLFGREFVDSGEKGRDLRFLMNLHNNEAGRTTVFSEMRQECKCHGMSGSCTVRTCWMRLPTLRAVGDVLRDRFDGASRVLYGNRGSNRASRAELLRLEPEDPAHKPPSPHDLVYFEKSPNFCTYSGRLGTAGTAGRACNSSSPALDGCELLCCGRGHRTRTQRVTERCNCTFHWCCHVSCRNCTHTRVLHECL.

The first 27 residues, 1–27 (MGLWALLPGWVSATLLLALAALPAALA), serve as a signal peptide directing secretion. An N-linked (GlcNAc...) asparagine glycan is attached at Asn-29. 11 cysteine pairs are disulfide-bonded: Cys-93–Cys-104, Cys-143–Cys-151, Cys-153–Cys-170, Cys-218–Cys-232, Cys-220–Cys-227, Cys-299–Cys-330, Cys-315–Cys-325, Cys-329–Cys-369, Cys-345–Cys-360, Cys-347–Cys-357, and Cys-352–Cys-353. Ser-224 carries O-palmitoleoyl serine; by PORCN lipidation. Residues Asn-316 and Asn-346 are each glycosylated (N-linked (GlcNAc...) asparagine). Asn-359 is a glycosylation site (N-linked (GlcNAc...) asparagine).

The protein belongs to the Wnt family. Forms a soluble 1:1 complex with AFM; this prevents oligomerization and is required for prolonged biological activity. The complex with AFM may represent the physiological form in body fluids. Interacts with PORCN. Interacts with RSPO1, RSPO2 and RSPO3. Interacts with WLS. Post-translationally, palmitoleoylation is required for efficient binding to frizzled receptors. Palmitoleoylation is necessary for proper trafficking to cell surface. Depalmitoleoylated by NOTUM, leading to inhibit Wnt signaling pathway.

The protein localises to the secreted. The protein resides in the extracellular space. It localises to the extracellular matrix. In terms of biological role, ligand for members of the frizzled family of seven transmembrane receptors. Acts in the canonical Wnt signaling pathway by promoting beta-catenin-dependent transcriptional activation. In some developmental processes, is also a ligand for the coreceptor RYK, thus triggering Wnt signaling. Plays an essential role in the development of the embryonic brain and central nervous system (CNS). Has a role in osteoblast function, bone development and bone homeostasis. In Homo sapiens (Human), this protein is Proto-oncogene Wnt-1 (WNT1).